Consider the following 577-residue polypeptide: Arginine--tRNA ligase (577 aa).

A 'HIGH' region motif is present at residues 123-133 (PNVAKEMHVGH).

It belongs to the class-I aminoacyl-tRNA synthetase family. As to quaternary structure, monomer.

The protein resides in the cytoplasm. The enzyme catalyses tRNA(Arg) + L-arginine + ATP = L-arginyl-tRNA(Arg) + AMP + diphosphate. This chain is Arginine--tRNA ligase, found in Cronobacter sakazakii (strain ATCC BAA-894) (Enterobacter sakazakii).